The primary structure comprises 3033 residues: Genome polyprotein (3033 aa).

An N-acetylserine; by host modification is found at S2. Residues 2–23 (STNPKPQRKTKRNTNRRPQDVK) form an interaction with STAT1 region. Positions 2–58 (STNPKPQRKTKRNTNRRPQDVKFPGGGQIVGGVYLLPRRGPRLGVRATRKTSERSQP) are interaction with EIF2AK2/PKR. The interaction with DDX3X stretch occupies residues 2–59 (STNPKPQRKTKRNTNRRPQDVKFPGGGQIVGGVYLLPRRGPRLGVRATRKTSERSQPR). The segment at 2 to 75 (STNPKPQRKT…PKDRRSAGKS (74 aa)) is disordered. Over 2–168 (STNPKPQRKT…EDGINYATGN (167 aa)) the chain is Cytoplasmic. Short sequence motifs (nuclear localization signal) lie at residues 5–13 (PKPQRKTKR) and 38–43 (PRRGPR). The segment covering 7–16 (PQRKTKRNTN) has biased composition (basic residues). Low complexity predominate over residues 32–47 (GGVYLLPRRGPRLGVR). S53 carries the post-translational modification Phosphoserine; by host. 2 consecutive short sequence motifs (nuclear localization signal) follow at residues 58–64 (PRGRRQP) and 66–71 (PKDRRS). Phosphoserine; by host occurs at positions 99 and 116. Positions 112-152 (PRHRSRNLGKVIDTLTCGFADLMGYIPVVGAPVGGVARALA) are important for endoplasmic reticulum and mitochondrial localization. An interaction with APOA2 region spans residues 122–173 (VIDTLTCGFADLMGYIPVVGAPVGGVARALAHGVRVLEDGINYATGNLPGCS). The tract at residues 164–167 (YATG) is important for lipid droplets localization. The helical transmembrane segment at 169-189 (LPGCSFSIFLLALLSCMSVPV) threads the bilayer. Positions 178–191 (LLALLSCMSVPVSA) are cleaved as a propeptide — ER anchor for the core protein, removed in mature form by host signal peptidase. Topologically, residues 190–358 (SAVEVKNTSQ…TGAHWGVMFG (169 aa)) are lumenal. Residues N196, N209, and N234 are each glycosylated (N-linked (GlcNAc...) asparagine; by host). Residues 265-296 (IVVSATFCSALYIGDVCGAIMIAAQATIISPQ) form an important for fusion region. Residue N305 is glycosylated (N-linked (GlcNAc...) asparagine; by host). The helical transmembrane segment at 359-379 (LAYFSMQGAWAKVVVILLLTA) threads the bilayer. At 380-729 (GVDAQTHTIS…WEWVVLLFLL (350 aa)) the chain is on the lumenal side. The HVR1 stretch occupies residues 385-412 (THTISGHAARTTHGLVSLFTPGSQQNIQ). N417, N423, and N430 each carry an N-linked (GlcNAc...) (high mannose) asparagine; by host glycan. Disulfide bonds link C429/C554, C452/C459, C488/C496, and C505/C510. N448 carries N-linked (GlcNAc...) asparagine; by host glycosylation. The segment at 475–480 (EENVTN) is HVR2. N-linked (GlcNAc...) asparagine; by host glycosylation is present at N477. Residues 482–495 (DNMRPYCWHYPPRP) are CD81-binding 1. A glycan (N-linked (GlcNAc...) asparagine; by host) is linked at N534. A CD81-binding 2 region spans residues 546–553 (PPRGAWFG). An N-linked (GlcNAc...) asparagine; by host glycan is attached at N558. 4 disulfide bridges follow: C566–C571, C585–C589, C601–C624, and C611–C648. N627 and N649 each carry an N-linked (GlcNAc...) (high mannose) asparagine; by host glycan. C656 and C681 are disulfide-bonded. A PKR/eIF2-alpha phosphorylation homology domain (PePHD) region spans residues 664 to 675 (SQLSPLLHSTTE). Residues 730–750 (LADARVCACLWMLLLLGQAEA) form a helical membrane-spanning segment. Over 751-761 (ALEKLVILHAA) the chain is Lumenal. Residues 762 to 782 (SAASSHGMLCFIIFFIAAWYI) traverse the membrane as a helical segment. Residues 783–786 (KGRV) are Cytoplasmic-facing. A helical membrane pass occupies residues 787–807 (TPLVTYSYLGMWSFSLLLLAL). Over 808–817 (PQQAYALDTT) the chain is Lumenal. A helical transmembrane segment spans residues 818-838 (EQGQIGLVLLVVISVFTLSPA). Topologically, residues 839–885 (YKILLCRSLWWLSYLLVRAEALIQDWVPPWQARGGRDGIIWAATIFC) are cytoplasmic. A helical transmembrane segment spans residues 886-906 (PGVLFDITNWLLAILGPGYLL). One can recognise a Peptidase C18 domain in the interval 903–1030 (GYLLRSVLTS…EYTSKGWKLL (128 aa)). Residues 907–932 (RSVLTSTPYFVRAQALLRICAAVRHL) are Lumenal-facing. The segment at 908 to 1210 (SVLTSTPYFV…PIESLDVIIR (303 aa)) is protease NS2-3. The S-palmitoyl cysteine; by host moiety is linked to residue C926. A helical membrane pass occupies residues 933 to 953 (SGGKYVQMMLLTLGKWTGTYI). Positions 933–953 (SGGKYVQMMLLTLGKWTGTYI) are interaction with host SCPS1. At 954–1661 (YDHLSPMSGW…CMQADLEIMT (708 aa)) the chain is on the cytoplasmic side. Active-site for protease NS2 activity; shared with dimeric partner residues include H956, E976, and C997. Residues 1031-1212 (APITAYAQQT…ESLDVIIRSP (182 aa)) form the Peptidase S29 domain. Residues H1087 and D1111 each act as charge relay system; for serine protease NS3 activity in the active site. The Zn(2+) site is built by C1127 and C1129. S1169 serves as the catalytic Charge relay system; for serine protease NS3 activity. Positions 1175 and 1179 each coordinate Zn(2+). In terms of domain architecture, Helicase ATP-binding spans 1221–1373 (PAVPQTYQVG…PNIEEVALGH (153 aa)). ATP is bound at residue 1234 to 1241 (APTGSGKS). Mg(2+)-binding residues include S1241 and E1321. A DECH box motif is present at residues 1320-1323 (DECH). Positions 1490–1502 (QRRGRTGRGRLGI) are RNA-binding. The chain crosses the membrane as a helical span at residues 1662–1682 (STWVLAGGVLAAIAAYCLATG). The segment at 1683–1694 (CVVCIGRVNINQ) is NS3-binding. Over 1683-1809 (CVVCIGRVNI…ALTSPLPTST (127 aa)) the chain is Cytoplasmic. The chain crosses the membrane as a helical span at residues 1810–1830 (TILLNIMGGWLASQIAPAAGA). The Lumenal segment spans residues 1831-1832 (TG). A helical transmembrane segment spans residues 1833 to 1853 (FVVSGLVGAAVGSIGLGKILV). D1854 is a topological domain (cytoplasmic). A helical transmembrane segment spans residues 1855-1875 (VLAGYGAGISGALVAFKIMSG). Residues 1876 to 1885 (EKPSVEDVVN) lie on the Lumenal side of the membrane. Residues 1886 to 1906 (LLPGILSPGALVVGVICAAIL) form a helical membrane-spanning segment. The Cytoplasmic portion of the chain corresponds to 1907 to 1976 (RRHVGQGEGA…WITEDCPVPC (70 aa)). Residue C1976 is the site of S-palmitoyl cysteine; by host attachment. The stretch at 1977–2007 (AGSWLRDIWDWACTILTDFKNWLSTKLLPKM) is an intramembrane region. Residues 2008–3012 (PGLPFISCQR…YHSVSRARPR (1005 aa)) are Cytoplasmic-facing. Zn(2+) is bound by residues C2015, C2033, C2035, and C2056. An FKBP8-binding region spans residues 2124-2212 (EFFSWVDGVQ…ASSSASQLSA (89 aa)). Residues 2124–2332 (EFFSWVDGVQ…PTPPPRRRRA (209 aa)) form a transcriptional activation region. Residues 2139–2143 (PTPKP) form an interaction with non-structural protein 4A region. The segment at 2193-2212 (RLARGSPPSEASSSASQLSA) is disordered. The interval 2193–2460 (RLARGSPPSE…ALITPCGPEE (268 aa)) is interaction with host SKP2. Phosphoserine; by host is present on residues S2198, S2201, S2205, S2208, S2211, and S2214. Over residues 2198–2212 (SPPSEASSSASQLSA) the composition is skewed to low complexity. An ISDR region spans residues 2214-2249 (SLRATCTAHAKNYAVEMVDANFFMGSDVTRIESETK). Residues 2214–2275 (SLRATCTAHA…REPSVPSEYL (62 aa)) are interaction with EIF2AK2/PKR. Residues 2249 to 2306 (KVLILDSLDPSVEEEDEREPSVPSEYLLPKKKFPQALPVWARPDYNPPVVETWKRPDY) form an NS4B-binding region. A V3 region spans residues 2299 to 2376 (ETWKRPDYDP…MDTTDATDQP (78 aa)). The tract at residues 2308-2328 (PPTVSGCALPPRVTAPTPPPR) is disordered. The SH3-binding signature appears at 2322–2325 (APTP). The Nuclear localization signal signature appears at 2327 to 2335 (PRRRRALVL). K2350 is covalently cross-linked (Glycyl lysine isopeptide (Lys-Gly) (interchain with G-Cter in ubiquitin)). A disordered region spans residues 2353–2431 (GQLPPSCDSG…PDLDSGSWST (79 aa)). Polar residues predominate over residues 2361–2373 (SGRSTGMDTTDAT). A phosphoserine; by host mark is found at S2471 and S2484. Residues 2656–2774 (PMGFSYDTRC…ISESQGAEED (119 aa)) enclose the RdRp catalytic domain. D2662, D2760, and D2761 together coordinate Mg(2+). The chain crosses the membrane as a helical span at residues 3013 to 3033 (FLLLCLLLLSVGVGIFLLPAR).

Belongs to the hepacivirus polyprotein family. Homooligomer. Interacts with E1 (via C-terminus). Interacts with the non-structural protein 5A. Interacts (via N-terminus) with host STAT1 (via SH2 domain); this interaction results in decreased STAT1 phosphorylation and ubiquitin-mediated proteasome-dependent STAT1 degradation, leading to decreased IFN-stimulated gene transcription. Interacts with host STAT3; this interaction constitutively activates STAT3. Interacts with host LTBR receptor. Interacts with host TNFRSF1A receptor and possibly induces apoptosis. Interacts with host HNRPK. Interacts with host YWHAE. Interacts with host UBE3A/E6AP. Interacts with host DDX3X. Interacts with host APOA2. Interacts with host RXRA protein. Interacts with host SP110 isoform 3/Sp110b; this interaction sequesters the transcriptional corepressor SP110 away from the nucleus. Interacts with host CREB3 nuclear transcription protein; this interaction triggers cell transformation. Interacts with host ACY3. Interacts with host C1QR1. Interacts with host RBM24; this interaction, which enhances the interaction of the mature core protein with 5'-UTR, may inhibit viral translation and favor replication. Interacts with host EIF2AK2/PKR; this interaction induces the autophosphorylation of EIF2AK2. Part of the viral assembly initiation complex composed of NS2, E1, E2, NS3, NS4A, NS5A and the mature core protein. As to quaternary structure, forms a heterodimer with envelope glycoprotein E2. Interacts with mature core protein. Interacts with protease NS2. The heterodimer E1/E2 interacts with host CLDN1; this interaction plays a role in viral entry into host cell. Interacts with host SPSB2 (via C-terminus). Part of the viral assembly initiation complex composed of NS2, E1, E2, NS3, NS4A, NS5A and the mature core protein. Interacts with host NEURL3; this interaction prevents E1 binding to glycoprotein E2. In terms of assembly, forms a heterodimer with envelope glycoprotein E1. Interacts with host CD81 and SCARB1 receptors; these interactions play a role in viral entry into host cell. Interacts with host EIF2AK2/PKR; this interaction inhibits EIF2AK2 and probably allows the virus to evade the innate immune response. Interacts with host CD209/DC-SIGN and CLEC4M/DC-SIGNR. Interact with host SPCS1; this interaction is essential for viral particle assembly. Interacts with protease NS2. The heterodimer E1/E2 interacts with host CLDN1; this interaction plays a role in viral entry into host cell. Part of the viral assembly initiation complex composed of NS2, E1, E2, NS3, NS4A, NS5A and the mature core protein. Interacts with host SLC3A2/4F2hc; the interaction may facilitate viral entry into host cell. Interacts with human PLSCR1. Homohexamer. Homoheptamer. Interacts with protease NS2. As to quaternary structure, homodimer. Interacts with host SPCS1; this interaction is essential for viral particle assembly. Interacts with envelope glycoprotein E1. Interacts with envelope glycoprotein E2. Interacts with viroporin p7. Interacts with serine protease/helicase NS3. Part of the replication complex composed of NS2, NS3, NS4A, NS4B, NS5A and the RNA-directed RNA polymerase embedded in an ER-derived membranous web. Part of the viral assembly initiation complex composed of NS2, E1, E2, NS3, NS4A, NS5A and the mature core protein. In terms of assembly, interacts with protease NS2. Interacts with non-structural protein 4A; this interaction stabilizes the folding of NS3 serine protease. NS3-NS4A interaction is essential for NS3 activation and allows membrane anchorage of the latter. NS3/NS4A complex also prevents phosphorylation of host IRF3, thus preventing the establishment of dsRNA induced antiviral state. Interacts with host MAVS; this interaction leads to the cleavage and inhibition of host MAVS. Interacts with host TICAM1; this interaction leads to the cleavage and inhibition of host TICAM1. Interacts with host TANK-binding kinase/TBK1; this interaction results in the inhibition of the association between TBK1 and IRF3, which leads to the inhibition of IRF3 activation. Interacts with host RBM24. Part of the replication complex composed of NS2, NS3, NS4A, NS4B, NS5A and the RNA-directed RNA polymerase embedded in an ER-derived membranous web. Part of the viral assembly initiation complex composed of NS2, E1, E2, NS3, NS4A, NS5A and the mature core protein. Interacts with NS3 serine protease; this interaction stabilizes the folding of NS3 serine protease. NS3-NS4A interaction is essential for NS3 activation and allows membrane anchorage of the latter. Interacts with non-structural protein 5A (via N-terminus). Part of the replication complex composed of NS2, NS3, NS4A, NS4B, NS5A and the RNA-directed RNA polymerase embedded in an ER-derived membranous web. Part of the viral assembly initiation complex composed of NS2, E1, E2, NS3, NS4A, NS5A and the mature core protein. As to quaternary structure, homomultimer. Interacts with non-structural protein NS5A. Interacts with host PLA2G4C; this interaction likely initiates the recruitment of replication complexes to lipid droplets. Interacts with host STING; this interaction disrupts the interaction between STING and TBK1 thereby suppressing the interferon signaling. Part of the replication complex composed of NS2, NS3, NS4A, NS4B, NS5A and the RNA-directed RNA polymerase embedded in an ER-derived membranous web. In terms of assembly, monomer. Homodimer; dimerization is required for RNA-binding. Interacts with the mature core protein. Interacts (via N-terminus) with non-structural protein 4A. Interacts with non-structural protein 4B. Interacts (via region D2) with RNA-directed RNA polymerase. Part of the viral assembly initiation complex composed of NS2, E1, E2, NS3, NS4A, NS5A and the mature core protein. Part of the replication complex composed of NS2, NS3, NS4A, NS4B, NS5A and the RNA-directed RNA polymerase embedded in an ER-derived membranous web. Interacts with host GRB2. Interacts with host BIN1. Interacts with host PIK3R1. Interacts with host SRCAP. Interacts with host FKBP8. Interacts (via C-terminus) with host VAPB (via MSP domain). Interacts with host EIF2AK2/PKR; this interaction leads to disruption of EIF2AK2 dimerization by NS5A and probably allows the virus to evade the innate immune response. Interacts (via N-terminus) with host PACSIN2 (via N-terminus); this interaction attenuates protein kinase C alpha-mediated phosphorylation of PACSIN2 by disrupting the interaction between PACSIN2 and PRKCA. Interacts (via N-terminus) with host SRC kinase (via SH2 domain). Interacts with most Src-family kinases. Interacts with host IFI27 and SKP2; promotes the ubiquitin-mediated proteasomal degradation of NS5A. Interacts with host GPS2. Interacts with host TNFRSF21; this interaction allows the modulation by the virus of JNK, p38 MAPK, STAT3, and Akt signaling pathways in a DR6-dependent manner. Interacts (via N-terminus) with host CIDEB (via N-terminus); this interaction seems to regulate the association of HCV particles with APOE. Interacts with host CHKA/Choline Kinase-alpha; CHKA bridges host PI4KA and NS5A and potentiates NS5A-stimulated PI4KA activity, which then facilitates the targeting of the ternary complex to the ER for viral replication. Interacts with host SPSB2 (via C-terminus); this interaction targets NS5A for ubiquitination and degradation. Interacts with host RAB18; this interaction may promote the association of NS5A and other replicase components with lipid droplets. Interacts (via region D2) with host PPIA/CYPA; the interaction stimulates RNA-binding ability of NS5A and is dependent on the peptidyl-prolyl cis-trans isomerase activity of PPIA/CYPA. Interacts with host TRIM14; this interaction induces the degradation of NS5A. Homooligomer. Interacts with non-structural protein 5A. Interacts with host VAPB. Interacts with host PRK2/PKN2. Interacts with host HNRNPA1 and SEPT6; these interactions facilitate viral replication. Part of the replication complex composed of NS2, NS3, NS4A, NS4B, NS5A and the RNA-directed RNA polymerase. Requires Zn(2+) as cofactor. It depends on Mg(2+) as a cofactor. Post-translationally, specific enzymatic cleavages in vivo yield mature proteins. The structural proteins, core, E1, E2 and p7 are produced by proteolytic processing by host signal peptidases. The core protein precursor is synthesized as a 23 kDa, which is retained in the ER membrane through the hydrophobic signal peptide. Cleavage by the signal peptidase releases the 21 kDa mature core protein. The cleavage of the core protein precursor occurs between aminoacids 176 and 188 but the exact cleavage site is not known. Some degraded forms of the core protein appear as well during the course of infection. The other proteins (p7, NS2, NS3, NS4A, NS4B, NS5A and NS5B) are cleaved by the viral proteases. Autoprocessing between NS2 and NS3 is mediated by the NS2 cysteine protease catalytic domain and regulated by the NS3 N-terminal domain. Phosphorylated by host PKC and PKA. In terms of processing, ubiquitinated; mediated by UBE3A and leading to core protein subsequent proteasomal degradation. Post-translationally, highly N-glycosylated. Palmitoylation is required for NS2/3 autoprocessing and E2 recruitment to membranes. In terms of processing, palmitoylated. This modification may play a role in its polymerization or in protein-protein interactions. Post-translationally, phosphorylated on serines in a basal form termed p56. p58 is a hyperphosphorylated form of p56. p56 and p58 coexist in the cell in roughly equivalent amounts. Hyperphosphorylation is dependent on the presence of NS4A. Host CSNK1A1/CKI-alpha or RPS6KB1 kinases may be responsible for NS5A phosphorylation. Tyrosine phosphorylation is essential for the interaction with host SRC. In terms of processing, ubiquitinated. Ubiquitination, most probably at Lys-2350, mediated by host IFI27 and SKP2 leads to proteasomal degradation, restricting viral infection. Ubiquitination by host TRIM22 leads to interruption of viral replication. Post-translationally, the N-terminus is phosphorylated by host PRK2/PKN2.

Its subcellular location is the host endoplasmic reticulum membrane. It is found in the host mitochondrion membrane. It localises to the virion. The protein resides in the host cytoplasm. The protein localises to the host nucleus. Its subcellular location is the host lipid droplet. It is found in the virion membrane. It localises to the host mitochondrion. The protein resides in the host cell membrane. The protein localises to the host perinuclear region. The catalysed reaction is Hydrolysis of four peptide bonds in the viral precursor polyprotein, commonly with Asp or Glu in the P6 position, Cys or Thr in P1 and Ser or Ala in P1'.. It catalyses the reaction a ribonucleoside 5'-triphosphate + H2O = a ribonucleoside 5'-diphosphate + phosphate + H(+). The enzyme catalyses ATP + H2O = ADP + phosphate + H(+). It carries out the reaction RNA(n) + a ribonucleoside 5'-triphosphate = RNA(n+1) + diphosphate. With respect to regulation, inhibited by the antiviral drug hexamethylene amiloride. Inhibition by amantadine appears to be genotype-dependent. Also inhibited by long-alkyl-chain iminosugar derivatives. Activity is up-regulated by PRK2/PKN2-mediated phosphorylation. Packages viral RNA to form a viral nucleocapsid, and promotes virion budding. Participates in the viral particle production as a result of its interaction with the non-structural protein 5A. Binds RNA and may function as a RNA chaperone to induce the RNA structural rearrangements taking place during virus replication. Modulates viral translation initiation by interacting with viral IRES and 40S ribosomal subunit. Affects various cell signaling pathways, host immunity and lipid metabolism. Prevents the establishment of cellular antiviral state by blocking the interferon-alpha/beta (IFN-alpha/beta) and IFN-gamma signaling pathways and by blocking the formation of phosphorylated STAT1 and promoting ubiquitin-mediated proteasome-dependent degradation of STAT1. Activates STAT3 leading to cellular transformation. Regulates the activity of cellular genes, including c-myc and c-fos. May repress the promoter of p53, and sequester CREB3 and SP110 isoform 3/Sp110b in the cytoplasm. Represses cell cycle negative regulating factor CDKN1A, thereby interrupting an important check point of normal cell cycle regulation. Targets transcription factors involved in the regulation of inflammatory responses and in the immune response: suppresses TNF-induced NF-kappa-B activation, and activates AP-1. Binds to dendritic cells (DCs) via C1QR1, resulting in down-regulation of T-lymphocytes proliferation. Alters lipid metabolism by interacting with hepatocellular proteins involved in lipid accumulation and storage. Induces up-regulation of FAS promoter activity, and thereby contributes to the increased triglyceride accumulation in hepatocytes (steatosis). Its function is as follows. Forms a heterodimer with envelope glycoprotein E2, which mediates virus attachment to the host cell, virion internalization through clathrin-dependent endocytosis and fusion with host membrane. Fusion with the host cell is most likely mediated by both E1 and E2, through conformational rearrangements of the heterodimer required for fusion rather than a classical class II fusion mechanism. E1/E2 heterodimer binds host apolipoproteins such as APOB and ApoE thereby forming a lipo-viro-particle (LVP). APOE associated to the LVP allows the initial virus attachment to cell surface receptors such as the heparan sulfate proteoglycans (HSPGs), syndecan-1 (SDC1), syndecan-1 (SDC2), the low-density lipoprotein receptor (LDLR) and scavenger receptor class B type I (SCARB1). The cholesterol transfer activity of SCARB1 allows E2 exposure and binding of E2 to SCARB1 and the tetraspanin CD81. E1/E2 heterodimer binding on CD81 activates the epithelial growth factor receptor (EGFR) signaling pathway. Diffusion of the complex E1-E2-EGFR-SCARB1-CD81 to the cell lateral membrane allows further interaction with Claudin 1 (CLDN1) and occludin (OCLN) to finally trigger HCV entry. Functionally, forms a heterodimer with envelope glycoprotein E1, which mediates virus attachment to the host cell, virion internalization through clathrin-dependent endocytosis and fusion with host membrane. Fusion with the host cell is most likely mediated by both E1 and E2, through conformational rearrangements of the heterodimer required for fusion rather than a classical class II fusion mechanism. The interaction between envelope glycoprotein E2 and host apolipoprotein E/APOE allows the proper assembly, maturation and infectivity of the viral particles. This interaction is probably promoted via the up-regulation of cellular autophagy by the virus. E1/E2 heterodimer binds host apolipoproteins such as APOB and APOE thereby forming a lipo-viro-particle (LVP). APOE associated to the LVP allows the initial virus attachment to cell surface receptors such as the heparan sulfate proteoglycans (HSPGs), syndecan-1 (SDC1), syndecan-1 (SDC2), the low-density lipoprotein receptor (LDLR) and scavenger receptor class B type I (SCARB1). The cholesterol transfer activity of SCARB1 allows E2 exposure and binding of E2 to SCARB1 and the tetraspanin CD81. E1/E2 heterodimer binding on CD81 activates the epithelial growth factor receptor (EGFR) signaling pathway. Diffusion of the complex E1-E2-EGFR-SCARB1-CD81 to the cell lateral membrane allows further interaction with Claudin 1 (CLDN1) and occludin (OCLN) to finally trigger HCV entry. Inhibits host EIF2AK2/PKR activation, preventing the establishment of an antiviral state. Viral ligand for CD209/DC-SIGN and CLEC4M/DC-SIGNR, which are respectively found on dendritic cells (DCs), and on liver sinusoidal endothelial cells and macrophage-like cells of lymph node sinuses. These interactions allow the capture of circulating HCV particles by these cells and subsequent facilitated transmission to permissive cells such as hepatocytes and lymphocyte subpopulations. The interaction between E2 and host amino acid transporter complex formed by SLC3A2 and SLC7A5/LAT1 may facilitate viral entry into host cell. In terms of biological role, ion channel protein that acts as a viroporin and plays an essential role in the assembly, envelopment and secretion of viral particles. Regulates the host cell secretory pathway, which induces the intracellular retention of viral glycoproteins and favors assembly of viral particles. Creates a pore in acidic organelles and releases Ca(2+) and H(+) in the cytoplasm of infected cells, leading to a productive viral infection. High levels of cytoplasmic Ca(2+) may trigger membrane trafficking and transport of viral ER-associated proteins to viroplasms, sites of viral genome replication. This ionic imbalance induces the assembly of the inflammasome complex, which triggers the maturation of pro-IL-1beta into IL-1beta through the action of caspase-1. Targets also host mitochondria and induces mitochondrial depolarization. In addition of its role as a viroporin, acts as a lipid raft adhesion factor. Cysteine protease required for the proteolytic auto-cleavage between the non-structural proteins NS2 and NS3. The N-terminus of NS3 is required for the function of NS2 protease (active region NS2-3). Promotes the initiation of viral particle assembly by mediating the interaction between structural and non-structural proteins. Its function is as follows. Displays three enzymatic activities: serine protease with a chymotrypsin-like fold, NTPase and RNA helicase. NS3 serine protease, in association with NS4A, is responsible for the cleavages of NS3-NS4A, NS4A-NS4B, NS4B-NS5A and NS5A-NS5B. The NS3/NS4A complex prevents phosphorylation of host IRF3, thus preventing the establishment of dsRNA induced antiviral state. The NS3/NS4A complex induces host amino acid transporter component SLC3A2, thus contributing to HCV propagation. NS3 RNA helicase binds to RNA and unwinds both dsDNA and dsRNA in the 3' to 5' direction, and likely resolves RNA complicated stable secondary structures in the template strand. Binds a single ATP and catalyzes the unzipping of a single base pair of dsRNA. Inhibits host antiviral proteins TBK1 and IRF3 thereby preventing the establishment of an antiviral state. Cleaves host MAVS/CARDIF thereby preventing the establishment of an antiviral state. Cleaves host TICAM1/TRIF, thereby disrupting TLR3 signaling and preventing the establishment of an antiviral state. Functionally, peptide cofactor which forms a non-covalent complex with the N-terminal of NS3 serine protease. The NS3/NS4A complex prevents phosphorylation of host IRF3, thus preventing the establishment of dsRNA induced antiviral state. The NS3/NS4A complex induces host amino acid transporter component SLC3A2, thus contributing to HCV propagation. In terms of biological role, induces a specific membrane alteration that serves as a scaffold for the virus replication complex. This membrane alteration gives rise to the so-called ER-derived membranous web that contains the replication complex. NS4B self-interaction contributes to its function in membranous web formation. Promotes host TRIF protein degradation in a CASP8-dependent manner thereby inhibiting host TLR3-mediated interferon signaling. Disrupts the interaction between STING and TBK1 contributing to the inhibition of interferon signaling. Phosphorylated protein that is indispensable for viral replication and assembly. Both hypo- and hyperphosphorylated states are required for the viral life cycle. The hyperphosphorylated form of NS5A is an inhibitor of viral replication. Involved in RNA-binding and especially in binding to the viral genome. Zinc is essential for RNA-binding. Participates in the viral particle production as a result of its interaction with the mature viral core protein. Its interaction with host VAPB may target the viral replication complex to vesicles. Down-regulates viral IRES translation initiation. Mediates interferon resistance, presumably by interacting with and inhibiting host EIF2AK2/PKR. Prevents BIN1-induced apoptosis. Acts as a transcriptional activator of some host genes important for viral replication when localized in the nucleus. Via the interaction with host PACSIN2, modulates lipid droplet formation in order to promote virion assembly. Modulates TNFRSF21/DR6 signaling pathway for viral propagation. Its function is as follows. RNA-dependent RNA polymerase that performs primer-template recognition and RNA synthesis during viral replication. Initiates RNA transcription/replication at a flavin adenine dinucleotide (FAD), resulting in a 5'- FAD cap on viral RNAs. In this way, recognition of viral 5' RNA by host pattern recognition receptors can be bypassed, thereby evading activation of antiviral pathways. In Hepatitis C virus genotype 2k (isolate VAT96) (HCV), this protein is Genome polyprotein.